A 708-amino-acid polypeptide reads, in one-letter code: MATGRIQFAVSTPCNTKGKPSGYRLFEFKNDRLALVPSERGCTKVDVNANIQAFCYLRPNGRDTSISPDATHILDSCDYMVLAKSNGFIEIISNYQYKIKNGLRLAPSYILRCTPEDFESNFFSDYMIAGLEYSQGLLYCCMCSGRIYVFVMNLPTDYIQYKNMYNPMFPDCFFKVHHDNNTTHSSEEEKLFEGSTRYTGRSCSKHICYFLLPIEPSHLRSSPVVSSFCNMYQGLPIYRPSMYLHIERGISTFHINPLDRFCFMTVSPRSPLFIRKIILPLTYVTFLSTFISLKNSIQGDTCGEILSWDNVAQQNGFGSLFSWISNKFTFDTDIINSTIWDDIVKYSGTGMLDSGIVWKQRQGHAKDDIYELFHTQDMLGSSRRNSSFSTASSEPRPLSRRRRESFQALTRDAFRERMDVPCSTKWELDSFIRGLRRNTFMVDFEIVEKISHRNGNDGVNEDDNTTDESDETMTSFLTDNYKKMDIVCIDHFVTLSAFRPRYYDEPIIKIDSLSNKNGSENGTNEEEWAESQMKVDGQVIDDETAQFKQALGNLCSFKKLFMLDDSLCFILDTHGVLLINRFEIKNTKNLLRNSKDTIRIIPHDFGLINDTIVIINDIDVGTDNVCALTFHLVVTSMAGEITVLKGEFFKNCRLGRIKLCDSLKLNRKDRFVDKLALIDYDGLNAQKRRLDYDEKDLYTFIVKKVKRD.

Residues 381 to 396 (SSRRNSSFSTASSEPR) show a composition bias toward low complexity. A disordered region spans residues 381 to 403 (SSRRNSSFSTASSEPRPLSRRRR).

Interacts with core components of the GID/CTLH ubiquitin ligase complex. GID12 binds both the substrate receptor GID4 and the tip of GID5 in the scaffolding module, sealing GID4 onto the scaffold.

Its function is as follows. Regulator of the GID E3 ligase complex. Modulates both assembly of the substrate receptor GID4 into the GID E3 ligase complex and its activity toward its substrates. GID12-binding remodels the N-degron binding pocket in the GID(SR4) complex, and could limit substrate accessibility of a bulky substrate to a ubiquitynation active site, thereby stabilizing gluconeogenic enzyme substrates. Involved in actin patch formation. The polypeptide is GID complex associated protein 12 (Saccharomyces cerevisiae (strain ATCC 204508 / S288c) (Baker's yeast)).